The following is a 130-amino-acid chain: MSFQLRSSARIPSRSCSSFTLLAFLLLFTLPQHRAQAAPFSAMVATELRCVCLTLAPRINPKMIANLEVIPAGPHCPKVEVIAKLKNQKDNVCLDPQAPLIKKVIQKILGSENKKTKRNALALVRSASTQ.

An N-terminal signal peptide occupies residues 1-37 (MSFQLRSSARIPSRSCSSFTLLAFLLLFTLPQHRAQA). Disulfide bonds link Cys50–Cys76 and Cys52–Cys93.

Belongs to the intercrine alpha (chemokine CxC) family. Monomer. Homodimer.

It localises to the secreted. Functionally, may participate in the recruitment of inflammatory cells by injured or infected tissue. This chain is C-X-C motif chemokine 5 (Cxcl5), found in Rattus norvegicus (Rat).